The sequence spans 218 residues: Ras-related protein Rab-27B (218 aa).

Position 2 is an N-acetylthreonine (Thr2). 16–24 (GDSGVGKTT) lines the GTP pocket. The short motif at 38 to 46 (FITTVGIDF) is the Effector region element. GTP is bound by residues 74–78 (DTAGQ), 133–136 (NKAD), and 163–165 (SAA). Cys123 and Cys188 are joined by a disulfide. The tract at residues 194 to 218 (IPDTVNGGNSGNLDGEKPPEKKCIC) is disordered. The span at 207 to 218 (DGEKPPEKKCIC) shows a compositional bias: basic and acidic residues. S-geranylgeranyl cysteine attachment occurs at residues Cys216 and Cys218. Cysteine methyl ester is present on Cys218.

The protein belongs to the small GTPase superfamily. Rab family. In terms of assembly, interacts with SYTL2, SYTL4, MYRIP and MLPH. Interacts with RPH3A and RPH3A. Interacts (GDP-bound form preferentially) with DENND10. In terms of tissue distribution, expressed primarily in testis.

It localises to the membrane. The protein resides in the late endosome. The enzyme catalyses GTP + H2O = GDP + phosphate + H(+). Regulated by guanine nucleotide exchange factors (GEFs) which promote the exchange of bound GDP for free GTP, GTPase activating proteins (GAPs) which increase the GTP hydrolysis activity, and GDP dissociation inhibitors which inhibit the dissociation of the nucleotide from the GTPase. Activated by GEFs such as DENND10. Small GTPase which cycles between active GTP-bound and inactive GDP-bound states. In its active state, binds to a variety of effector proteins to regulate homeostasis of late endocytic pathway, including endosomal positioning, maturation and secretion. Plays a role in NTRK2/TRKB axonal anterograde transport by facilitating the association of NTRK2/TRKB with KLC1. May be involved in targeting uroplakins to urothelial apical membranes. The protein is Ras-related protein Rab-27B (RAB27B) of Homo sapiens (Human).